The primary structure comprises 203 residues: Thymidylate kinase (203 aa).

G10–T17 provides a ligand contact to ATP.

The protein belongs to the thymidylate kinase family.

The enzyme catalyses dTMP + ATP = dTDP + ADP. Its function is as follows. Phosphorylation of dTMP to form dTDP in both de novo and salvage pathways of dTTP synthesis. The polypeptide is Thymidylate kinase (Thermoanaerobacter pseudethanolicus (strain ATCC 33223 / 39E) (Clostridium thermohydrosulfuricum)).